Here is a 302-residue protein sequence, read N- to C-terminus: Trans-4-hydroxy-L-proline dehydratase activating enzyme (302 aa).

The Radical SAM core domain maps to H14–N297. Residues C28, C32, C35, C54, C57, C60, and C93 each coordinate [4Fe-4S] cluster. Residue W34–H36 coordinates S-adenosyl-L-methionine. 2 4Fe-4S ferredoxin-type domains span residues K45 to T74 and K75 to Q103. S-adenosyl-L-methionine is bound by residues G133, D183 to K185, and H257.

It belongs to the organic radical-activating enzymes family. Requires [4Fe-4S] cluster as cofactor.

It carries out the reaction glycyl-[protein] + reduced [flavodoxin] + S-adenosyl-L-methionine = glycin-2-yl radical-[protein] + semiquinone [flavodoxin] + 5'-deoxyadenosine + L-methionine + H(+). In terms of biological role, catalyzes activation of the trans-4-hydroxy-L-proline dehydratase under anaerobic conditions by generation of an organic free radical on a glycine residue, via a homolytic cleavage of S-adenosyl-L-methionine (SAM). Is involved in the anaerobic degradation of 4-hydroxyproline. The chain is Trans-4-hydroxy-L-proline dehydratase activating enzyme from Clostridioides difficile (Peptoclostridium difficile).